Here is a 398-residue protein sequence, read N- to C-terminus: S-adenosylmethionine synthase (398 aa).

His26 serves as a coordination point for ATP. Asp28 is a binding site for Mg(2+). Glu54 is a K(+) binding site. Positions 67 and 110 each coordinate L-methionine. Residues 110–120 (QSPDIAQGVNE) form a flexible loop region. Residues 177–179 (DAK), 243–244 (RF), Asp252, 258–259 (RK), Ala275, and Lys279 each bind ATP. Asp252 provides a ligand contact to L-methionine. Position 283 (Lys283) interacts with L-methionine.

It belongs to the AdoMet synthase family. As to quaternary structure, homotetramer; dimer of dimers. The cofactor is Mg(2+). K(+) is required as a cofactor.

Its subcellular location is the cytoplasm. It catalyses the reaction L-methionine + ATP + H2O = S-adenosyl-L-methionine + phosphate + diphosphate. Its pathway is amino-acid biosynthesis; S-adenosyl-L-methionine biosynthesis; S-adenosyl-L-methionine from L-methionine: step 1/1. In terms of biological role, catalyzes the formation of S-adenosylmethionine (AdoMet) from methionine and ATP. The overall synthetic reaction is composed of two sequential steps, AdoMet formation and the subsequent tripolyphosphate hydrolysis which occurs prior to release of AdoMet from the enzyme. The sequence is that of S-adenosylmethionine synthase from Desulfotalea psychrophila (strain LSv54 / DSM 12343).